Consider the following 439-residue polypeptide: Xylose isomerase (439 aa).

Active-site residues include H101 and D104. 7 residues coordinate Mg(2+): E232, E268, H271, D296, D307, D309, and D339.

Belongs to the xylose isomerase family. In terms of assembly, homotetramer. Mg(2+) serves as cofactor.

It is found in the cytoplasm. The enzyme catalyses alpha-D-xylose = alpha-D-xylulofuranose. This Pseudoalteromonas atlantica (strain T6c / ATCC BAA-1087) protein is Xylose isomerase.